The chain runs to 250 residues: Probable aquaporin TIP1-1 (250 aa).

Transmembrane regions (helical) follow at residues 25–44 (AEFI…GMAF) and 58–77 (LIAA…SVGA). The short motif at 85 to 87 (NPA) is the NPA 1 element. 3 helical membrane passes run 103–121 (GLLY…CFLL), 144–163 (LVLE…ATAV), and 170–192 (LGTI…GGAF). Residues 198-200 (NPA) carry the NPA 2 motif. Residues 216–233 (WVYWVGPLIGGGLAGVIY) form a helical membrane-spanning segment.

This sequence belongs to the MIP/aquaporin (TC 1.A.8) family. TIP (TC 1.A.8.10) subfamily. As to expression, expressed in roots and leaves.

The protein localises to the vacuole membrane. Its function is as follows. Aquaporins facilitate the transport of water and small neutral solutes across cell membranes. May be involved in transport from the vacuolar compartment to the cytoplasm. The protein is Probable aquaporin TIP1-1 (TIP1-1) of Oryza sativa subsp. japonica (Rice).